Consider the following 459-residue polypeptide: Type IV methyl-directed restriction enzyme EcoKMcrB subunit (459 aa).

GTP-binding positions include 201-208, 300-303, and 333-336; these read GPPGVGKT, DKRG, and NTAD.

Functionally, recognizes N4- and C5-methylcytosine (and 5-hydroxy-methylcytosines) produced by a broad range of DNA methylases and appears to act against 5-methylcytosine preceded by a purine residue. Binds to DNA containing methylated cytosines; also binds to GTP. Isoform 33 kDa is less active than isoform 51 kDa and may play a role in regulating the activity of isoform 51 kDa by competing with it in DNA and protein binding abilities. The polypeptide is Type IV methyl-directed restriction enzyme EcoKMcrB subunit (mcrB) (Escherichia coli (strain K12)).